Reading from the N-terminus, the 427-residue chain is Kallistatin (427 aa).

Residues 1–20 (MHLIDYLLLLLVGLLALSHG) form the signal peptide. N-linked (GlcNAc...) asparagine glycans are attached at residues Asn33, Asn108, and Asn157. Residue Asn238 is glycosylated (N-linked (GlcNAc...) (complex) asparagine).

This sequence belongs to the serpin family. As to quaternary structure, monomer and some homodimers. In terms of processing, the N-terminus is blocked. As to expression, expressed by the liver and secreted in plasma.

The protein localises to the secreted. Inhibits human amidolytic and kininogenase activities of tissue kallikrein. Inhibition is achieved by formation of an equimolar, heat- and SDS-stable complex between the inhibitor and the enzyme, and generation of a small C-terminal fragment of the inhibitor due to cleavage at the reactive site by tissue kallikrein. The polypeptide is Kallistatin (SERPINA4) (Homo sapiens (Human)).